The primary structure comprises 454 residues: GA-binding protein alpha chain (454 aa).

The region spanning 168–251 is the PNT domain; sequence AALEGYRKEQ…SHLELLRKYV (84 aa). A disordered region spans residues 297–316; that stretch reads QRAPRISGEDRSSPGNRTGN. Serine 303 is subject to Phosphoserine. The ETS DNA-binding region spans 320-400; that stretch reads IQLWQFLLEL…QGKRFVYKFV (81 aa).

This sequence belongs to the ETS family. As to quaternary structure, heterotetramer of two alpha and two beta subunits.

Its subcellular location is the nucleus. Its function is as follows. Transcription factor capable of interacting with purine rich repeats (GA repeats). Positively regulates transcription of transcriptional repressor RHIT/ZNF205. Functionally, (Microbial infection) Necessary for the expression of the Adenovirus E4 gene. This is GA-binding protein alpha chain (GABPA) from Homo sapiens (Human).